Consider the following 67-residue polypeptide: Large ribosomal subunit protein uL29 (67 aa).

This sequence belongs to the universal ribosomal protein uL29 family.

This Ehrlichia ruminantium (strain Gardel) protein is Large ribosomal subunit protein uL29.